The chain runs to 133 residues: FPRL1 inhibitory protein (133 aa).

Positions 1-28 (MKKNITKTIIASTVIAAGLLTQTNDAKA) are cleaved as a signal peptide.

The protein belongs to the CHIPS/FLIPr family.

Its subcellular location is the secreted. Functionally, may be involved in countering the first line of host defense mechanisms. Impairs the leukocyte response to FPRL1 agonists by binding directly to host FPRL1. In Staphylococcus aureus (strain Mu50 / ATCC 700699), this protein is FPRL1 inhibitory protein (flr).